Here is a 570-residue protein sequence, read N- to C-terminus: Formate--tetrahydrofolate ligase (570 aa).

65–72 (TPHGEGKT) contributes to the ATP binding site.

This sequence belongs to the formate--tetrahydrofolate ligase family.

It catalyses the reaction (6S)-5,6,7,8-tetrahydrofolate + formate + ATP = (6R)-10-formyltetrahydrofolate + ADP + phosphate. It functions in the pathway one-carbon metabolism; tetrahydrofolate interconversion. The polypeptide is Formate--tetrahydrofolate ligase (Shewanella sp. (strain ANA-3)).